The chain runs to 281 residues: INSIG family protein (281 aa).

The Cytoplasmic portion of the chain corresponds to 1-93 (MSRKEIYEPR…FIDYSSLITF (93 aa)). Serine 28 is modified (phosphoserine). A helical membrane pass occupies residues 94–120 (FCKLCVIFGLGFVFTYLAEQIVQDAKL). At 121–134 (PLLTVNLKSWKFEP) the chain is on the lumenal side. Residues 135–159 (PWPAIFGFVAVILGLSYRRMDTKYP) traverse the membrane as a helical segment. Residues 160 to 170 (LGAAPLRPSQS) lie on the Cytoplasmic side of the membrane. The helical transmembrane segment at 171-186 (SKWQWISRYLAAFATL) threads the bilayer. The Lumenal segment spans residues 187 to 189 (LLS). A helical membrane pass occupies residues 190-215 (MKKLLFISNSHSIVALVASSASIWYI). Residues 216-221 (FDRSRN) lie on the Cytoplasmic side of the membrane. Residues 222–256 (GIILSTITSVLGSILYYNLVDTSKIELNGVEFPEI) traverse the membrane as a helical segment. Residues 257 to 260 (QFRL) are Lumenal-facing. The chain crosses the membrane as a helical span at residues 261-281 (WIPMILFSASTIVGNAGRLLF).

This sequence belongs to the INSIG family.

Its subcellular location is the endoplasmic reticulum membrane. The chain is INSIG family protein (ins1) from Schizosaccharomyces pombe (strain 972 / ATCC 24843) (Fission yeast).